The following is a 206-amino-acid chain: Holliday junction branch migration complex subunit RuvA (206 aa).

The tract at residues 1–64 (MIGRLRGNLL…EDAQLLYGFN (64 aa)) is domain I. The domain II stretch occupies residues 65–143 (TKKERALFRE…GWGAGDLFTP (79 aa)). A flexible linker region spans residues 144–157 (ADTTSMDDASDLIS). Residues 158–206 (SPQSAQDEAVSALISLGYKPVQASKMVSQVAKPDMTSESLIRESLKSMI) are domain III.

The protein belongs to the RuvA family. Homotetramer. Forms an RuvA(8)-RuvB(12)-Holliday junction (HJ) complex. HJ DNA is sandwiched between 2 RuvA tetramers; dsDNA enters through RuvA and exits via RuvB. An RuvB hexamer assembles on each DNA strand where it exits the tetramer. Each RuvB hexamer is contacted by two RuvA subunits (via domain III) on 2 adjacent RuvB subunits; this complex drives branch migration. In the full resolvosome a probable DNA-RuvA(4)-RuvB(12)-RuvC(2) complex forms which resolves the HJ.

Its subcellular location is the cytoplasm. The RuvA-RuvB-RuvC complex processes Holliday junction (HJ) DNA during genetic recombination and DNA repair, while the RuvA-RuvB complex plays an important role in the rescue of blocked DNA replication forks via replication fork reversal (RFR). RuvA specifically binds to HJ cruciform DNA, conferring on it an open structure. The RuvB hexamer acts as an ATP-dependent pump, pulling dsDNA into and through the RuvAB complex. HJ branch migration allows RuvC to scan DNA until it finds its consensus sequence, where it cleaves and resolves the cruciform DNA. This chain is Holliday junction branch migration complex subunit RuvA, found in Aliivibrio salmonicida (strain LFI1238) (Vibrio salmonicida (strain LFI1238)).